Here is a 181-residue protein sequence, read N- to C-terminus: tRNA-splicing endonuclease (181 aa).

Catalysis depends on residues tyrosine 118, histidine 126, and lysine 157.

This sequence belongs to the tRNA-intron endonuclease family. Archaeal short subfamily. As to quaternary structure, homotetramer; although the tetramer contains four active sites, only two participate in the cleavage. Therefore, it should be considered as a dimer of dimers.

The catalysed reaction is pretRNA = a 3'-half-tRNA molecule with a 5'-OH end + a 5'-half-tRNA molecule with a 2',3'-cyclic phosphate end + an intron with a 2',3'-cyclic phosphate and a 5'-hydroxyl terminus.. Functionally, endonuclease that removes tRNA introns. Cleaves pre-tRNA at the 5'- and 3'-splice sites to release the intron. The products are an intron and two tRNA half-molecules bearing 2',3' cyclic phosphate and 5'-OH termini. Recognizes a pseudosymmetric substrate in which 2 bulged loops of 3 bases are separated by a stem of 4 bp. The polypeptide is tRNA-splicing endonuclease (Sulfolobus acidocaldarius (strain ATCC 33909 / DSM 639 / JCM 8929 / NBRC 15157 / NCIMB 11770)).